Here is a 348-residue protein sequence, read N- to C-terminus: Phosphate acyltransferase (348 aa).

The protein belongs to the PlsX family. Homodimer. Probably interacts with PlsY.

It is found in the cytoplasm. It carries out the reaction a fatty acyl-[ACP] + phosphate = an acyl phosphate + holo-[ACP]. Its pathway is lipid metabolism; phospholipid metabolism. Catalyzes the reversible formation of acyl-phosphate (acyl-PO(4)) from acyl-[acyl-carrier-protein] (acyl-ACP). This enzyme utilizes acyl-ACP as fatty acyl donor, but not acyl-CoA. This is Phosphate acyltransferase from Pectobacterium carotovorum subsp. carotovorum (strain PC1).